The following is a 248-amino-acid chain: MKLTFFLGLLALISCFTPSESQRFSRRPYLPGQLPPPPLYRPRWVPPSPPPPYDSRLNSPLSLPFVPGRVPPSSFSRFSQAVILSQLFPLESIRQPRLFPGYPNLHFPLRPYYVGPIRILKPPFPPIPFFLAIYLPISNPEPQINITTADTTITTNPPTTATATTSTSTKPTMTISSSTVPISSTPEPATSISAATPAASTENTTQILANRPHTVLLNATVQVTTSNQTILSSPAFKSFWQKLFAIFG.

A signal peptide spans 1–21; sequence MKLTFFLGLLALISCFTPSES. Residue Q22 is modified to Pyrrolidone carboxylic acid. The interval 150-198 is disordered; the sequence is DTTITTNPPTTATATTSTSTKPTMTISSSTVPISSTPEPATSISAATPA. N218 carries N-linked (GlcNAc...) asparagine glycosylation.

Belongs to the PROL1/PROL3 family. As to expression, abundantly expressed in lacrimal gland where it found in the secretory endpieces. Also expressed at modest levels in the submandibular gland.

It is found in the secreted. In terms of biological role, opiorphin is an endogenous inhibitor of neprilysin and aminopeptidase N. Inhibits the breakdown of substance P, Mca-BK2 and Met-enkephalin by neprilysin in vitro with IC(50) values of 29 uM, 33 uM and 33 uM respectively. Inhibits the breakdown of Ala-pNA by aminopeptidase N in vitro with an IC(50) of 65 uM. Has a potent analgesic effect when administered to rats by intravenous injection. The sequence is that of Opiorphin prepropeptide from Homo sapiens (Human).